A 213-amino-acid polypeptide reads, in one-letter code: Superoxide dismutase [Fe] (213 aa).

4 residues coordinate Fe cation: His-26, His-73, Asp-156, and His-160.

This sequence belongs to the iron/manganese superoxide dismutase family. In terms of assembly, homodimer. It depends on Fe cation as a cofactor.

It catalyses the reaction 2 superoxide + 2 H(+) = H2O2 + O2. Functionally, destroys superoxide anion radicals which are normally produced within the cells and which are toxic to biological systems. This is Superoxide dismutase [Fe] (sodB) from Helicobacter pylori (strain ATCC 700392 / 26695) (Campylobacter pylori).